The following is a 343-amino-acid chain: Low conductance mechanosensitive channel YnaI (343 aa).

Topologically, residues 1-9 (MIAELFTNN) are periplasmic. A helical membrane pass occupies residues 10–30 (ALNLVIIFGSCAALILMSFWF). Residues 31–40 (RRGNRKRKGF) lie on the Cytoplasmic side of the membrane. A helical transmembrane segment spans residues 41–61 (LFHAVQFLIYTIIISAVGSII). The Periplasmic portion of the chain corresponds to 62–77 (NYVIENYKLKFITPGV). Residues 78-98 (IDFICTSLIAVILTIKLFLLI) traverse the membrane as a helical segment. Residues 99–125 (NQFEKQQIKKGRDITSARIMSRIIKIT) are Cytoplasmic-facing. The chain crosses the membrane as a helical span at residues 126–146 (IIVVLVLLYGEHFGMSLSGLL). A topological domain (periplasmic) is located at residue threonine 147. The chain crosses the membrane as a helical span at residues 148–168 (FGGIGGLAVGMAGKDILSNFF). Topologically, residues 169-343 (SGIMLYFDRP…DNITPPEQGR (175 aa)) are cytoplasmic.

The protein belongs to the MscS (TC 1.A.23) family. Homoheptamer.

Its subcellular location is the cell inner membrane. Its function is as follows. Mechanosensitive channel that protects cells against hypoosmotic stress when highly overexpressed. This Escherichia coli (strain K12) protein is Low conductance mechanosensitive channel YnaI (ynaI).